We begin with the raw amino-acid sequence, 755 residues long: LIM domain and actin-binding protein 1 (755 aa).

At Met-1 the chain carries N-acetylmethionine. Ser-15 bears the Phosphoserine mark. Residues 43-56 show a composition bias toward basic and acidic residues; it reads KAAEEANMERKKNN. The tract at residues 43 to 151 is disordered; that stretch reads KAAEEANMER…YPRSEDSHDF (109 aa). Over residues 88-97 the composition is skewed to polar residues; it reads DSLPNSSSDG. Ser-132 is modified (phosphoserine). Positions 164–166 match the Required for interaction with NPC1L1 motif; the sequence is CLG. 2 stretches are compositionally biased toward basic and acidic residues: residues 168 to 177 and 199 to 208; these read SRHEAEKPEM and MMFEKGEHSQ. The tract at residues 168-226 is disordered; that stretch reads SRHEAEKPEMSENTETSGKIEKYNVPLNRLKMMFEKGEHSQNKSPWTQGRNAGGRRLSE. Ser-225, Ser-230, and Ser-242 each carry phosphoserine. The interval 241–379 is disordered; the sequence is LSSSAFNSEK…ESSPSKTAKK (139 aa). A compositionally biased stretch (basic and acidic residues) spans 249-258; it reads EKNESKRNLE. Ser-263 is subject to Phosphoserine. Positions 292 to 305 are enriched in basic and acidic residues; the sequence is KPSESKTHKWEQKE. Positions 342–354 are enriched in polar residues; sequence CNSQGRSEAQQPI. Ser-348, Ser-360, Ser-367, and Ser-372 each carry phosphoserine. Residues 363–375 show a composition bias toward polar residues; that stretch reads ARTSSLPESSPSK. One can recognise an LIM zinc-binding domain in the interval 386-446; it reads ESCVECQKTV…KPHFNQLFKS (61 aa). The residue at position 437 (Lys-437) is an N6-succinyllysine. Disordered regions lie at residues 468-493 and 505-714; these read ENEE…GVED and SMEA…DTTT. Ser-488 carries the phosphoserine modification. Positions 491-511 are required for interaction with MYO5B; that stretch reads VEDAPIAKVGVLAASMEAKAS. 2 stretches are compositionally biased toward basic and acidic residues: residues 512–526 and 555–566; these read SQRE…ETKK and WPPEDEVCKTEA. Residues 599–611 are compositionally biased toward low complexity; that stretch reads SSVKSPKPLSPSL. Residues Ser-600, Ser-603, Ser-608, and Ser-616 each carry the phosphoserine modification. Composition is skewed to basic and acidic residues over residues 638–653 and 662–673; these read RPSR…RWQS and EAPRGRDGRSFE. 3 positions are modified to phosphoserine: Ser-697, Ser-722, and Ser-737.

In terms of assembly, interacts with NPC1L1; bridges NPC1L1 with MYO5B. Interacts with MYO5B; bridges MYO5B with NPC1L1. Interacts with PXN; this complex stabilizes actin dynamics. Interacts with F-actin and G-actin. Interacts with LUZP1 (via C-terminus); both proteins restrict ciliation and may work together to regulate this process. Binds RAB40B (GTP-bound); interaction influences LIMA1 subcellular localization in lamellipodia during cell migration. Phosphorylation of the C-terminal region by MAPK1/MAPK3 reduces its association with F-actin and contributes to actin filament reorganization and enhanced cell motility. In terms of processing, ubiquitinated by the ECS(RAB40B) complex leading to its degradation. Expressed throughout the kidney, including renal cortex, medulla, and glomeruli. Expressed in glomeruli, tubular epithelial cells, and extraglomerular vascular endothelial cells (at protein level).

It is found in the cytoplasm. The protein localises to the cell junction. Its subcellular location is the focal adhesion. It localises to the cytoskeleton. The protein resides in the stress fiber. It is found in the cell membrane. The protein localises to the cell projection. Its subcellular location is the ruffle. It localises to the lamellipodium. Functionally, actin-binding protein involved in actin cytoskeleton regulation and dynamics. Increases the number and size of actin stress fibers and inhibits membrane ruffling. Inhibits actin filament depolymerization. Bundles actin filaments, delays filament nucleation and reduces formation of branched filaments. Acts as a negative regulator of primary cilium formation. Plays a role in cholesterol homeostasis. Influences plasma cholesterol levels through regulation of intestinal cholesterol absorption. May act as a scaffold protein by regulating NPC1L1 transportation, an essential protein for cholesterol absorption, to the plasma membrane by recruiting MYO5B to NPC1L1, and thus facilitates cholesterol uptake. The chain is LIM domain and actin-binding protein 1 from Rattus norvegicus (Rat).